Consider the following 547-residue polypeptide: Methyl-accepting chemotaxis citrate transducer (547 aa).

Over 1–5 (MKNIK) the chain is Cytoplasmic. Residues 6-29 (VITGVIATLGIFSALLLVTGILFY) form a helical membrane-spanning segment. The Periplasmic portion of the chain corresponds to 30–189 (SAVSSDRLNF…ASDQNQSSFT (160 aa)). The helical transmembrane segment at 190-213 (QMQWTLGIILLIVLIVLAFIWLGL) threads the bilayer. Topologically, residues 214–547 (QRVLLRPLQR…AAEQANWESF (334 aa)) are cytoplasmic. Residues 215 to 267 (RVLLRPLQRIMAHIQTIADGDLTHEIEAEGRSEMGQLAAGLKTMQQSLIRTVS) enclose the HAMP domain. Residues 272–501 (NADSIYTGAG…ESAAAAAALE (230 aa)) form the Methyl-accepting transducer domain. Q296 carries the post-translational modification Glutamate methyl ester (Gln). The residue at position 303 (E303) is a Glutamate methyl ester (Glu). Glutamate methyl ester (Gln) is present on Q310. Residues 317–336 (QNTDNARQATGLAKTASETA) form a disordered region. E492 and E501 each carry glutamate methyl ester (Glu). Residues 518 to 547 (KQPRREASPTTLSKGLTPQPAAEQANWESF) are disordered.

This sequence belongs to the methyl-accepting chemotaxis (MCP) protein family. Post-translationally, methylation level is increased by citrate and decreased by phenol.

Its subcellular location is the cell inner membrane. Functionally, acts as a receptor for citrate and mediates taxis away from phenol. Also mediates an attractant response to metal-citrate complexes. This chain is Methyl-accepting chemotaxis citrate transducer (tcp), found in Salmonella typhimurium (strain LT2 / SGSC1412 / ATCC 700720).